A 185-amino-acid chain; its full sequence is MINEILQKSEKKMSASLDVLLQELSGIRTGRSSPALVEHIRVEYAGVPTPINHLANISAPDPRYITIQPWDRSCLSAIEKAIMKSDLGLMPNNDGNIIRLNIPPLSEERRQEMIKIVNKRLEEDKIAMRNVRRDAMDEMKKLEKAKEISQDDLKRGSDQLQKITDNFIAKADKLGADKEAELRQV.

The protein belongs to the RRF family.

The protein localises to the cytoplasm. Responsible for the release of ribosomes from messenger RNA at the termination of protein biosynthesis. May increase the efficiency of translation by recycling ribosomes from one round of translation to another. In Dehalococcoides mccartyi (strain CBDB1), this protein is Ribosome-recycling factor.